A 434-amino-acid chain; its full sequence is Enolase (434 aa).

Glutamine 163 is a (2R)-2-phosphoglycerate binding site. Glutamate 205 (proton donor) is an active-site residue. Mg(2+)-binding residues include aspartate 242, glutamate 289, and aspartate 316. Positions 341, 370, 371, and 392 each coordinate (2R)-2-phosphoglycerate. Lysine 341 functions as the Proton acceptor in the catalytic mechanism.

This sequence belongs to the enolase family. Mg(2+) is required as a cofactor.

Its subcellular location is the cytoplasm. It localises to the secreted. The protein localises to the cell surface. It catalyses the reaction (2R)-2-phosphoglycerate = phosphoenolpyruvate + H2O. Its pathway is carbohydrate degradation; glycolysis; pyruvate from D-glyceraldehyde 3-phosphate: step 4/5. In terms of biological role, catalyzes the reversible conversion of 2-phosphoglycerate (2-PG) into phosphoenolpyruvate (PEP). It is essential for the degradation of carbohydrates via glycolysis. This chain is Enolase, found in Lacticaseibacillus casei (strain BL23) (Lactobacillus casei).